The following is a 137-amino-acid chain: MGAHLVRRYLGDASVEPDPLQMPTFPPDYGFPERKEREMVATQQEMMDAQLRLQLRDYCAHYLIRLLKCKRDSFPNFLACKQERHDWDYCEHRDYVMRMKEFERERRLLQRKKRREKKAAELAKGQGPGEVDPKVAL.

A lipid anchor (N-myristoyl glycine) is attached at Gly-2. Residues 56–98 (RDYCAHYLIRLLKCKRDSFPNFLACKQERHDWDYCEHRDYVMR) form the CHCH domain. The Cx9C motif 1 motif lies at 59–69 (CAHYLIRLLKC). Disulfide bonds link Cys-59-Cys-90 and Cys-69-Cys-80. At Ser-73 the chain carries Phosphoserine. The Cx9C motif 2 motif lies at 80-90 (CKQERHDWDYC). The tract at residues 113 to 137 (KRREKKAAELAKGQGPGEVDPKVAL) is disordered.

The protein belongs to the complex I NDUFB7 subunit family. As to quaternary structure, complex I is composed of 45 different subunits.

The protein localises to the mitochondrion inner membrane. It localises to the mitochondrion intermembrane space. Accessory subunit of the mitochondrial membrane respiratory chain NADH dehydrogenase (Complex I), that is believed not to be involved in catalysis. Complex I functions in the transfer of electrons from NADH to the respiratory chain. The immediate electron acceptor for the enzyme is believed to be ubiquinone. The polypeptide is NADH dehydrogenase [ubiquinone] 1 beta subcomplex subunit 7 (NDUFB7) (Gorilla gorilla gorilla (Western lowland gorilla)).